The chain runs to 1090 residues: Telomerase reverse transcriptase (1090 aa).

Positions 184–301 (GFLLRPPSRK…PLEGGPSWRS (118 aa)) are disordered. The span at 190 to 204 (PSRKHKSFQVGKKTR) shows a compositional bias: basic residues. 2 stretches are compositionally biased toward basic and acidic residues: residues 218–232 (EESR…EVST) and 252–262 (HHEERRQHEAV). Over residues 281–294 (KPPPETSAAPPPLE) the composition is skewed to pro residues. The short motif at 316 to 321 (TLGFLY) is the TFLY; involved in RNA binding element. 2 interaction with RNA template regions span residues 371 to 376 (LPLRYF) and 477 to 503 (WKIK…ELAY). A Reverse transcriptase domain is found at 569–893 (SPAQVASLPK…CLFPWCGLLL (325 aa)). Mg(2+) contacts are provided by aspartate 666, aspartate 826, and aspartate 827.

It belongs to the reverse transcriptase family. Telomerase subfamily. In terms of assembly, catalytic subunit of the telomerase holoenzyme complex composed minimally of TERT and the telomerase RNA template component (TERC). Expressed at highest levels in gonads and brain, and at lower levels in heart, spleen, kidney, gill, muscle and skin. Detected in embryonic stem cell lines before and after differentiation. Isoform F is expressed in gonads, with higher levels in testis relative to ovary, but is not detected in other tissues. Isoform B is expressed predominantly in testis. Isoform C is up-regulated in embryonic stem cell lines after differentiation.

The protein resides in the nucleus. It localises to the chromosome. Its subcellular location is the telomere. The enzyme catalyses DNA(n) + a 2'-deoxyribonucleoside 5'-triphosphate = DNA(n+1) + diphosphate. Telomerase is a ribonucleoprotein enzyme essential for the replication of chromosome termini in most eukaryotes. It elongates telomeres. It is a reverse transcriptase that adds simple sequence repeats to chromosome ends by copying a template sequence within the RNA component of the enzyme. This chain is Telomerase reverse transcriptase, found in Oryzias latipes (Japanese rice fish).